Reading from the N-terminus, the 525-residue chain is Frizzled-4 (525 aa).

Residues 1 to 24 (MERRGGGGRMLALLLAGLLGGARG) form the signal peptide. Over 25–200 (FGDEEERRCD…KCGYDAGLYS (176 aa)) the chain is Extracellular. The FZ domain maps to 28 to 149 (EEERRCDAIR…NDHNHMCMEG (122 aa)). 8 disulfide bridges follow: Cys-33/Cys-94, Cys-41/Cys-87, Cys-78/Cys-116, Cys-105/Cys-146, Cys-109/Cys-133, Cys-169/Cys-188, Cys-192/Cys-270, and Cys-290/Cys-365. Residue Asn-47 is glycosylated (N-linked (GlcNAc...) asparagine). N-linked (GlcNAc...) asparagine glycosylation is present at Asn-132. The chain crosses the membrane as a helical span at residues 201–231 (RSAKEFTDIWMAVWASLCFISTAFTVLTFLI). The Cytoplasmic portion of the chain corresponds to 232-237 (DSSRFS). The chain crosses the membrane as a helical span at residues 238-263 (YPERPIIFLSMCYNIYSIAYIVRLTV). Topologically, residues 264 to 287 (GRERISCDFEEAAEPVLIQEGLKN) are extracellular. Residues 288–321 (TGCAIIFLLMYFFGMASSIWWVILTLTWFLAAGL) traverse the membrane as a helical segment. Residues 322–324 (KWG) lie on the Cytoplasmic side of the membrane. The helical transmembrane segment at 325-353 (HEAIEMHSSYFHIAAWAIPAVKTIVILIM) threads the bilayer. At 354–371 (RLVDADELTGLCYVGNQN) the chain is on the extracellular side. The helical transmembrane segment at 372 to 406 (LDALTGFVVAPLFTYLVIGTLFIAAGLVALFKIRS) threads the bilayer. Topologically, residues 407–419 (NLQKDGTKTDKLE) are cytoplasmic. Residues 420–448 (RLMVKIGVFSVLYTVPATCVIACYFYEIS) form a helical membrane-spanning segment. The Extracellular portion of the chain corresponds to 449-461 (NWAVFRYSADDSN). Residues 462 to 483 (MAVEMLKIFMSLLVGITSGMWI) traverse the membrane as a helical segment. Topologically, residues 484–525 (WSAKTLHTWQKCSNRLVNSGKVKREKRADGWVKPGKGNETVV) are cytoplasmic. The short motif at 487 to 492 (KTLHTW) is the Lys-Thr-X-X-X-Trp motif, mediates interaction with the PDZ domain of Dvl family members element. Residues 523–525 (TVV) carry the PDZ-binding motif.

The protein belongs to the G-protein coupled receptor Fz/Smo family. In terms of assembly, interacts (via FZ domain) with TSKU; TSKU competes with WNT2B for binding to FZD4, inhibiting Wnt signaling and repressing peripheral eye development. Expressed in the developing kidney, interdigital spaces and optic cup.

It localises to the cell membrane. Its function is as follows. Receptor for Wnt proteins. Most frizzled receptors are coupled to the beta-catenin canonical signaling pathway, which leads to the activation of disheveled proteins, inhibition of GSK-3 kinase, nuclear accumulation of beta-catenin and activation of Wnt target genes. A second signaling pathway involving PKC and calcium fluxes has been seen for some family members, but it is not yet clear if it represents a distinct pathway or if it can be integrated in the canonical pathway, as PKC seems to be required for Wnt-mediated inactivation of GSK-3 kinase. Both pathways seem to involve interactions with G-proteins. May be involved in transduction and intercellular transmission of polarity information during tissue morphogenesis and/or in differentiated tissues. The protein is Frizzled-4 (FZD4) of Gallus gallus (Chicken).